We begin with the raw amino-acid sequence, 883 residues long: DNA mismatch repair protein MutS (883 aa).

Residue 633–640 participates in ATP binding; it reads GPNMGGKS.

This sequence belongs to the DNA mismatch repair MutS family.

In terms of biological role, this protein is involved in the repair of mismatches in DNA. It is possible that it carries out the mismatch recognition step. This protein has a weak ATPase activity. This is DNA mismatch repair protein MutS from Bordetella pertussis (strain Tohama I / ATCC BAA-589 / NCTC 13251).